The chain runs to 377 residues: Alanine racemase (377 aa).

Residue Lys-37 is the Proton acceptor; specific for D-alanine of the active site. N6-(pyridoxal phosphate)lysine is present on Lys-37. A substrate-binding site is contributed by Arg-135. Tyr-271 serves as the catalytic Proton acceptor; specific for L-alanine. A substrate-binding site is contributed by Met-319.

The protein belongs to the alanine racemase family. Pyridoxal 5'-phosphate is required as a cofactor.

It carries out the reaction L-alanine = D-alanine. It functions in the pathway amino-acid biosynthesis; D-alanine biosynthesis; D-alanine from L-alanine: step 1/1. Catalyzes the interconversion of L-alanine and D-alanine. May also act on other amino acids. The polypeptide is Alanine racemase (alr) (Helicobacter pylori (strain J99 / ATCC 700824) (Campylobacter pylori J99)).